The sequence spans 632 residues: 2-hydroxyacyl-CoA lyase 2 (632 aa).

Residues 10 to 30 (AWGFFSSFLLLAFGTLVAALL) form a helical membrane-spanning segment. Thiamine diphosphate is bound at residue E98. Residues 470–550 (DFVGTAAYLV…VMALIGNDAG (81 aa)) form a thiamine pyrophosphate binding region. Residues D521 and N547 each coordinate Mg(2+).

Belongs to the TPP enzyme family. Requires Mg(2+) as cofactor. It depends on thiamine diphosphate as a cofactor.

Its subcellular location is the endoplasmic reticulum membrane. The enzyme catalyses 2-hydroxyoctadecanoyl-CoA = heptadecanal + formyl-CoA. The catalysed reaction is (2R)-hydroxyhexadecanoyl-CoA = pentadecanal + formyl-CoA. Endoplasmic reticulum 2-OH acyl-CoA lyase involved in the cleavage (C1 removal) reaction in the fatty acid alpha-oxydation in a thiamine pyrophosphate (TPP)-dependent manner. Involved in the phytosphingosine degradation pathway. The chain is 2-hydroxyacyl-CoA lyase 2 (ILVBL) from Bos taurus (Bovine).